The following is a 141-amino-acid chain: Large ribosomal subunit protein uL11 (141 aa).

It belongs to the universal ribosomal protein uL11 family. Part of the ribosomal stalk of the 50S ribosomal subunit. Interacts with L10 and the large rRNA to form the base of the stalk. L10 forms an elongated spine to which L12 dimers bind in a sequential fashion forming a multimeric L10(L12)X complex. One or more lysine residues are methylated.

In terms of biological role, forms part of the ribosomal stalk which helps the ribosome interact with GTP-bound translation factors. The chain is Large ribosomal subunit protein uL11 from Clostridium botulinum (strain Kyoto / Type A2).